Consider the following 436-residue polypeptide: Platelet-activating factor acetylhydrolase (436 aa).

A signal peptide spans 1-21; the sequence is MAPPKLHTLFCLSGFLALVHP. N-linked (GlcNAc...) asparagine glycosylation is found at asparagine 76 and asparagine 200. Serine 271 serves as the catalytic Nucleophile. Aspartate 294 (charge relay system) is an active-site residue. A glycan (N-linked (GlcNAc...) asparagine) is linked at asparagine 324. Histidine 349 (charge relay system) is an active-site residue.

It belongs to the AB hydrolase superfamily. Lipase family. In terms of processing, N-glycosylated. Plasma.

It is found in the secreted. Its subcellular location is the extracellular space. The enzyme catalyses a 1-O-alkyl-2-acetyl-sn-glycero-3-phosphocholine + H2O = a 1-O-alkyl-sn-glycero-3-phosphocholine + acetate + H(+). The catalysed reaction is 1-O-decyl-2-acetyl-sn-glycero-3-phosphocholine + H2O = 1-O-decyl-sn-glycero-3-phosphocholine + acetate + H(+). It catalyses the reaction 1-O-dodecyl-2-acetyl-sn-glycero-3-phosphocholine + H2O = 1-O-dodecyl-sn-glycero-3-phosphocholine + acetate + H(+). It carries out the reaction 1-O-tetradecyl-2-acetyl-sn-glycero-3-phosphocholine + H2O = 1-O-tetradecyl-sn-glycero-3-phosphocholine + acetate + H(+). The enzyme catalyses 1-O-hexadecyl-2-acetyl-sn-glycero-3-phosphocholine + H2O = 1-O-hexadecyl-sn-glycero-3-phosphocholine + acetate + H(+). The catalysed reaction is 1-O-octadecyl-2-acetyl-sn-glycero-3-phosphocholine + H2O = 1-O-octadecyl-sn-glycero-3-phosphocholine + acetate + H(+). It catalyses the reaction 1-hexadecanoyl-2-acetyl-sn-glycero-3-phosphocholine + H2O = 1-hexadecanoyl-sn-glycero-3-phosphocholine + acetate + H(+). It carries out the reaction 1-hexadecanoyl-2-propionyl-sn-glycero-3-phosphocholine + H2O = propanoate + 1-hexadecanoyl-sn-glycero-3-phosphocholine + H(+). The enzyme catalyses 1-hexadecanoyl-2-butanoyl-sn-glycero-3-phosphocholine + H2O = butanoate + 1-hexadecanoyl-sn-glycero-3-phosphocholine + H(+). The catalysed reaction is 1-hexadecanoyl-2-pentanoyl-sn-glycero-3-phosphocholine + H2O = pentanoate + 1-hexadecanoyl-sn-glycero-3-phosphocholine + H(+). It catalyses the reaction 1-hexadecanoyl-2-glutaroyl-sn-glycero-3-phosphocholine + H2O = glutarate + 1-hexadecanoyl-sn-glycero-3-phosphocholine + H(+). It carries out the reaction 1-hexadecanoyl-2-(5-oxopentanoyl)-sn-glycero-3-phosphocholine + H2O = 5-oxopentanoate + 1-hexadecanoyl-sn-glycero-3-phosphocholine + H(+). The enzyme catalyses 1-hexadecanoyl-2-(9-oxononanoyl)-sn-glycero-3-phosphocholine + H2O = 9-oxononanoate + 1-hexadecanoyl-sn-glycero-3-phosphocholine + H(+). The catalysed reaction is 1-hexadecanoyl-2-[9-hydroperoxy-(10E-octadecenoyl)]-sn-glycero-3-phosphocholine + H2O = 9-hydroperoxy-10E-octadecenoate + 1-hexadecanoyl-sn-glycero-3-phosphocholine + H(+). It catalyses the reaction 1-hexadecanoyl-2-(10-hydroperoxy-8E-octadecenoyl)-sn-glycero-3-phosphocholine + H2O = 10-hydroperoxy-(8E)-octadecenoate + 1-hexadecanoyl-sn-glycero-3-phosphocholine + H(+). Its function is as follows. Lipoprotein-associated calcium-independent phospholipase A2 involved in phospholipid catabolism during inflammatory and oxidative stress response. At the lipid-aqueous interface, hydrolyzes the ester bond of fatty acyl group attached at sn-2 position of phospholipids (phospholipase A2 activity). Specifically targets phospholipids with a short-chain fatty acyl group at sn-2 position. Can hydrolyze phospholipids with long fatty acyl chains, only if they carry oxidized functional groups. Hydrolyzes and inactivates platelet-activating factor (PAF, 1-O-alkyl-2-acetyl-sn-glycero-3-phosphocholine), a potent pro-inflammatory signaling lipid that acts through PTAFR on various innate immune cells. Hydrolyzes oxidatively truncated phospholipids carrying an aldehyde group at omega position, preventing their accumulation in lipoprotein particles and uncontrolled pro-inflammatory effects. As part of high-density lipoprotein (HDL) particles, can hydrolyze phospholipids having long-chain fatty acyl hydroperoxides at sn-2 position and protect against potential accumulation of these oxylipins in the vascular wall. Catalyzes the release from membrane phospholipids of F2-isoprostanes, lipid biomarkers of cellular oxidative damage. The sequence is that of Platelet-activating factor acetylhydrolase (PLA2G7) from Cavia porcellus (Guinea pig).